A 249-amino-acid chain; its full sequence is LexA repressor (249 aa).

The segment at 1-26 (MAAQATGGRATQRSQQSPAKPKGLTV) is disordered. Residues 9–18 (RATQRSQQSP) are compositionally biased toward polar residues. A DNA-binding region (H-T-H motif) is located at residues 48 to 68 (MREIGDTVGLASLSSVTHQLS). Residues serine 173 and lysine 210 each act as for autocatalytic cleavage activity in the active site.

Belongs to the peptidase S24 family. As to quaternary structure, homodimer.

The enzyme catalyses Hydrolysis of Ala-|-Gly bond in repressor LexA.. In terms of biological role, represses a number of genes involved in the response to DNA damage (SOS response), including recA and lexA. In the presence of single-stranded DNA, RecA interacts with LexA causing an autocatalytic cleavage which disrupts the DNA-binding part of LexA, leading to derepression of the SOS regulon and eventually DNA repair. This Arthrobacter sp. (strain FB24) protein is LexA repressor.